A 365-amino-acid chain; its full sequence is UDP-N-acetylglucosamine--N-acetylmuramyl-(pentapeptide) pyrophosphoryl-undecaprenol N-acetylglucosamine transferase (365 aa).

UDP-N-acetyl-alpha-D-glucosamine-binding positions include 10–12, asparagine 124, arginine 165, serine 193, isoleucine 248, and glutamine 293; that span reads TGG.

This sequence belongs to the glycosyltransferase 28 family. MurG subfamily.

Its subcellular location is the cell inner membrane. It carries out the reaction di-trans,octa-cis-undecaprenyl diphospho-N-acetyl-alpha-D-muramoyl-L-alanyl-D-glutamyl-meso-2,6-diaminopimeloyl-D-alanyl-D-alanine + UDP-N-acetyl-alpha-D-glucosamine = di-trans,octa-cis-undecaprenyl diphospho-[N-acetyl-alpha-D-glucosaminyl-(1-&gt;4)]-N-acetyl-alpha-D-muramoyl-L-alanyl-D-glutamyl-meso-2,6-diaminopimeloyl-D-alanyl-D-alanine + UDP + H(+). It participates in cell wall biogenesis; peptidoglycan biosynthesis. In terms of biological role, cell wall formation. Catalyzes the transfer of a GlcNAc subunit on undecaprenyl-pyrophosphoryl-MurNAc-pentapeptide (lipid intermediate I) to form undecaprenyl-pyrophosphoryl-MurNAc-(pentapeptide)GlcNAc (lipid intermediate II). The chain is UDP-N-acetylglucosamine--N-acetylmuramyl-(pentapeptide) pyrophosphoryl-undecaprenol N-acetylglucosamine transferase from Geotalea uraniireducens (strain Rf4) (Geobacter uraniireducens).